A 111-amino-acid polypeptide reads, in one-letter code: Translation initiation factor 1A 1 (111 aa).

The interval 1 to 28 is disordered; sequence MTLADLKKPTSRASPSTEETVTRVRTPR. The S1-like domain occupies 22–96; it reads TRVRTPRREN…EKADVIWKYT (75 aa).

It belongs to the eIF-1A family.

Functionally, seems to be required for maximal rate of protein biosynthesis. Enhances ribosome dissociation into subunits and stabilizes the binding of the initiator Met-tRNA(I) to 40 S ribosomal subunits. The polypeptide is Translation initiation factor 1A 1 (eIF1A1) (Methanosarcina mazei (strain ATCC BAA-159 / DSM 3647 / Goe1 / Go1 / JCM 11833 / OCM 88) (Methanosarcina frisia)).